A 318-amino-acid polypeptide reads, in one-letter code: tRNA dimethylallyltransferase (318 aa).

An ATP-binding site is contributed by 9–16 (GATASGKT). Position 11–16 (11–16 (TASGKT)) interacts with substrate. 2 interaction with substrate tRNA regions span residues 34-37 (DSAQ) and 158-162 (QRIIR).

It belongs to the IPP transferase family. In terms of assembly, monomer. It depends on Mg(2+) as a cofactor.

It catalyses the reaction adenosine(37) in tRNA + dimethylallyl diphosphate = N(6)-dimethylallyladenosine(37) in tRNA + diphosphate. In terms of biological role, catalyzes the transfer of a dimethylallyl group onto the adenine at position 37 in tRNAs that read codons beginning with uridine, leading to the formation of N6-(dimethylallyl)adenosine (i(6)A). This Dichelobacter nodosus (strain VCS1703A) protein is tRNA dimethylallyltransferase.